A 122-amino-acid polypeptide reads, in one-letter code: Large ribosomal subunit protein uL14 (122 aa).

Belongs to the universal ribosomal protein uL14 family. Part of the 50S ribosomal subunit. Forms a cluster with proteins L3 and L19. In the 70S ribosome, L14 and L19 interact and together make contacts with the 16S rRNA in bridges B5 and B8.

Binds to 23S rRNA. Forms part of two intersubunit bridges in the 70S ribosome. This Trichlorobacter lovleyi (strain ATCC BAA-1151 / DSM 17278 / SZ) (Geobacter lovleyi) protein is Large ribosomal subunit protein uL14.